A 392-amino-acid chain; its full sequence is Succinate--CoA ligase [ADP-forming] subunit beta (392 aa).

One can recognise an ATP-grasp domain in the interval 9 to 248; sequence KDILRKFGVA…ISEEDPFEVE (240 aa). Residues lysine 50, 57–59, glutamate 103, methionine 106, and glutamate 111 contribute to the ATP site; that span reads GRG. The Mg(2+) site is built by asparagine 203 and aspartate 217. Substrate contacts are provided by residues asparagine 268 and 325–327; that span reads GIV.

The protein belongs to the succinate/malate CoA ligase beta subunit family. As to quaternary structure, heterotetramer of two alpha and two beta subunits. Requires Mg(2+) as cofactor.

The catalysed reaction is succinate + ATP + CoA = succinyl-CoA + ADP + phosphate. It carries out the reaction GTP + succinate + CoA = succinyl-CoA + GDP + phosphate. The protein operates within carbohydrate metabolism; tricarboxylic acid cycle; succinate from succinyl-CoA (ligase route): step 1/1. In terms of biological role, succinyl-CoA synthetase functions in the citric acid cycle (TCA), coupling the hydrolysis of succinyl-CoA to the synthesis of either ATP or GTP and thus represents the only step of substrate-level phosphorylation in the TCA. The beta subunit provides nucleotide specificity of the enzyme and binds the substrate succinate, while the binding sites for coenzyme A and phosphate are found in the alpha subunit. The polypeptide is Succinate--CoA ligase [ADP-forming] subunit beta (Chlorobium phaeobacteroides (strain DSM 266 / SMG 266 / 2430)).